A 417-amino-acid polypeptide reads, in one-letter code: UDP-N-acetylglucosamine 1-carboxyvinyltransferase (417 aa).

Phosphoenolpyruvate is bound at residue 22 to 23; the sequence is KN. Residue Arg93 coordinates UDP-N-acetyl-alpha-D-glucosamine. Cys117 functions as the Proton donor in the catalytic mechanism. Cys117 is subject to 2-(S-cysteinyl)pyruvic acid O-phosphothioketal. Residues 122 to 126, Asp304, and Ile326 each bind UDP-N-acetyl-alpha-D-glucosamine; that span reads RPVDQ.

This sequence belongs to the EPSP synthase family. MurA subfamily.

The protein localises to the cytoplasm. It carries out the reaction phosphoenolpyruvate + UDP-N-acetyl-alpha-D-glucosamine = UDP-N-acetyl-3-O-(1-carboxyvinyl)-alpha-D-glucosamine + phosphate. Its pathway is cell wall biogenesis; peptidoglycan biosynthesis. In terms of biological role, cell wall formation. Adds enolpyruvyl to UDP-N-acetylglucosamine. This is UDP-N-acetylglucosamine 1-carboxyvinyltransferase from Laribacter hongkongensis (strain HLHK9).